The following is a 263-amino-acid chain: Proenkephalin-A (263 aa).

The N-terminal stretch at 1–24 is a signal peptide; the sequence is MARFLGLCTWLLALGPGLLATVRA. Cystine bridges form between Cys26–Cys48, Cys30–Cys52, and Cys33–Cys65. 2 propeptides span residues 192-203 and 213-223; these read SPHLEDETKELQ and VGRPEWWMDYQ. Phosphoserine is present on Ser247.

It belongs to the opioid neuropeptide precursor family. Proenkephalin-A is cleaved by CTSL to generate Met-enkephalin. Post-translationally, processed and degraded by ACE. In terms of processing, probably cleaved by ACE. Processed by ACE to generate Met-enkephalin in the nucleus accumbens of the brain. Post-translationally, the N-terminal domain contains 6 conserved cysteines thought to be involved in disulfide bonding and/or processing. As to expression, secreted by neuroendocrine chromaffin cells through cromaffin granules.

The protein localises to the cytoplasmic vesicle. It is found in the secretory vesicle. Its subcellular location is the chromaffin granule lumen. It localises to the secreted. Functionally, neuropeptide that competes with and mimic the effects of opiate drugs. They play a role in a number of physiologic functions, including pain perception and responses to stress. Met-enkephalin-Arg-Phe neuropeptide acts as a strong ligand of Mu-type opioid receptor OPRM1. Met-enkephalin-Arg-Phe-binding to OPRM1 in the nucleus accumbens of the brain increases activation of OPRM1, leading to long-term synaptic depression of glutamate release. Its function is as follows. Increases glutamate release in the striatum and decreases GABA concentration in the striatum. In terms of biological role, increases glutamate release in the striatum. Functionally, enkelytin possesses antibacterial activity against Gram-positive bacteria such as Micrococcus luteus and Bacillus megaterium. The polypeptide is Proenkephalin-A (PENK) (Bos taurus (Bovine)).